The chain runs to 355 residues: Protein RecA (355 aa).

67-74 provides a ligand contact to ATP; the sequence is GPESSGKT.

This sequence belongs to the RecA family.

The protein localises to the cytoplasm. Functionally, can catalyze the hydrolysis of ATP in the presence of single-stranded DNA, the ATP-dependent uptake of single-stranded DNA by duplex DNA, and the ATP-dependent hybridization of homologous single-stranded DNAs. It interacts with LexA causing its activation and leading to its autocatalytic cleavage. This Shewanella baltica (strain OS223) protein is Protein RecA.